A 197-amino-acid polypeptide reads, in one-letter code: Rac-like GTP-binding protein ARAC6 (197 aa).

Residue 13 to 20 (GDGAVGKT) participates in GTP binding. Residues 35-43 (YVPTVFDNF) carry the Effector region motif. Residues 60-64 (DTAGQ) and 118-121 (TKLD) each bind GTP. Residue Ser160 participates in GDP binding. Cys194 is subject to Cysteine methyl ester. The S-geranylgeranyl cysteine moiety is linked to residue Cys194. Positions 195 to 197 (SIL) are cleaved as a propeptide — removed in mature form.

It belongs to the small GTPase superfamily. Rho family. In terms of assembly, interacts with SPK1. Ubiquitous. Preferentially expressed in mature pollen and pollen tubes.

The protein localises to the cytoplasm. The protein resides in the membrane. Functionally, may be involved in cell polarity control during the actin-dependent tip growth of pollen tubes. Its function is as follows. Inactive GDP-bound Rho GTPases reside in the cytosol, are found in a complex with Rho GDP-dissociation inhibitors (Rho GDIs), and are released from the GDI protein in order to translocate to membranes upon activation. The sequence is that of Rac-like GTP-binding protein ARAC6 (ARAC6) from Arabidopsis thaliana (Mouse-ear cress).